Reading from the N-terminus, the 429-residue chain is 3-phosphoshikimate 1-carboxyvinyltransferase (429 aa).

3-phosphoshikimate-binding residues include Lys23, Ser24, and Arg28. Residue Lys23 coordinates phosphoenolpyruvate. The phosphoenolpyruvate site is built by Gly95 and Arg123. 4 residues coordinate 3-phosphoshikimate: Ser168, Gln170, Asp316, and Lys343. Position 170 (Gln170) interacts with phosphoenolpyruvate. Catalysis depends on Asp316, which acts as the Proton acceptor. 2 residues coordinate phosphoenolpyruvate: Arg347 and Arg389.

The protein belongs to the EPSP synthase family. In terms of assembly, monomer.

It is found in the cytoplasm. The catalysed reaction is 3-phosphoshikimate + phosphoenolpyruvate = 5-O-(1-carboxyvinyl)-3-phosphoshikimate + phosphate. It functions in the pathway metabolic intermediate biosynthesis; chorismate biosynthesis; chorismate from D-erythrose 4-phosphate and phosphoenolpyruvate: step 6/7. In terms of biological role, catalyzes the transfer of the enolpyruvyl moiety of phosphoenolpyruvate (PEP) to the 5-hydroxyl of shikimate-3-phosphate (S3P) to produce enolpyruvyl shikimate-3-phosphate and inorganic phosphate. This is 3-phosphoshikimate 1-carboxyvinyltransferase from Bacillus cereus (strain AH187).